The following is a 342-amino-acid chain: tRNA N6-adenosine threonylcarbamoyltransferase (342 aa).

His120 and His124 together coordinate Fe cation. Substrate is bound by residues 142–146 (VVSGG), Asp175, Gly188, Asp192, and Asn281. Asp310 is a Fe cation binding site.

Belongs to the KAE1 / TsaD family. Fe(2+) serves as cofactor.

Its subcellular location is the cytoplasm. It catalyses the reaction L-threonylcarbamoyladenylate + adenosine(37) in tRNA = N(6)-L-threonylcarbamoyladenosine(37) in tRNA + AMP + H(+). Its function is as follows. Required for the formation of a threonylcarbamoyl group on adenosine at position 37 (t(6)A37) in tRNAs that read codons beginning with adenine. Is involved in the transfer of the threonylcarbamoyl moiety of threonylcarbamoyl-AMP (TC-AMP) to the N6 group of A37, together with TsaE and TsaB. TsaD likely plays a direct catalytic role in this reaction. In Geobacillus thermodenitrificans (strain NG80-2), this protein is tRNA N6-adenosine threonylcarbamoyltransferase.